A 295-amino-acid polypeptide reads, in one-letter code: Glutamyl-Q tRNA(Asp) synthetase (295 aa).

L-glutamate is bound by residues 9–13 and glutamate 45; that span reads RFAPT. A 'HIGH' region motif is present at residues 12-22; the sequence is PTPSGFLHFGS. Zn(2+) contacts are provided by cysteine 101, cysteine 103, tyrosine 115, and cysteine 119. Tyrosine 172 and arginine 190 together coordinate L-glutamate. Positions 228–232 match the 'KMSKS' region motif; the sequence is KLGKS. ATP is bound at residue lysine 231.

It belongs to the class-I aminoacyl-tRNA synthetase family. GluQ subfamily. The cofactor is Zn(2+).

Its function is as follows. Catalyzes the tRNA-independent activation of glutamate in presence of ATP and the subsequent transfer of glutamate onto a tRNA(Asp). Glutamate is transferred on the 2-amino-5-(4,5-dihydroxy-2-cyclopenten-1-yl) moiety of the queuosine in the wobble position of the QUC anticodon. This Pseudomonas putida (strain GB-1) protein is Glutamyl-Q tRNA(Asp) synthetase.